A 510-amino-acid polypeptide reads, in one-letter code: Cytochrome c-552 (510 aa).

Positions 1 to 50 (MVVFLFILYRQSDLKFKSMNGVIIVNTLKKRLFVATTMIWGLSVTLPVLA) are cleaved as a signal peptide. Position 124 (His124) interacts with heme c. Cys152, Cys155, and Lys156 together coordinate heme. Residues Cys190, Cys193, His194, Cys239, Cys242, and His243 each coordinate heme c. Ca(2+) contacts are provided by Glu245, Tyr246, Lys291, and Gln293. Residue Tyr246 participates in substrate binding. His294 serves as a coordination point for substrate. Heme c-binding residues include His305, Cys312, Cys315, His316, His331, Cys344, Cys347, His348, and His423.

This sequence belongs to the cytochrome c-552 family. It depends on Ca(2+) as a cofactor. Requires heme c as cofactor.

The protein localises to the periplasm. It catalyses the reaction 6 Fe(III)-[cytochrome c] + NH4(+) + 2 H2O = 6 Fe(II)-[cytochrome c] + nitrite + 8 H(+). It participates in nitrogen metabolism; nitrate reduction (assimilation). Its function is as follows. Catalyzes the reduction of nitrite to ammonia, consuming six electrons in the process. The chain is Cytochrome c-552 from Pasteurella multocida (strain Pm70).